Reading from the N-terminus, the 186-residue chain is Homeobox expressed in ES cells 1 (186 aa).

A DNA-binding region (homeobox) is located at residues 109–168 (GRRPRTAFTRSQIEILENVFRVNSYPGIDIREELAGKLALDEDRIQIWFQNRRAKLKRSH).

The protein belongs to the ANF homeobox family. In terms of assembly, interacts (via N-terminus) with zyx.

The protein resides in the nucleus. Its function is as follows. Regulates the earliest stages of development of the anterior neural plate. Plays a role in forebrain development by inhibiting the expression of otx2 and pax6 in the rostral region of the anterior neural plate. Necessary for both neural differentiation and neural patterning. Controls Spemann organizer development. May act as a transcriptional repressor. The protein is Homeobox expressed in ES cells 1 of Xenopus tropicalis (Western clawed frog).